The primary structure comprises 222 residues: uncharacterized protein (222 aa).

In terms of domain architecture, HTH gntR-type spans 8 to 77 (AKKGQIIYRY…GNAGYFVAKN (70 aa)).

This is an uncharacterized protein from Mycoplasma pneumoniae (strain ATCC 29342 / M129 / Subtype 1) (Mycoplasmoides pneumoniae).